A 66-amino-acid chain; its full sequence is Large ribosomal subunit protein eL29 (66 aa).

Positions 1–14 are enriched in polar residues; it reads MAKSKNSTNKNQIS. A disordered region spans residues 1 to 66; that stretch reads MAKSKNSTNK…KNLEKKVNKE (66 aa). Over residues 15–31 the composition is skewed to basic residues; it reads KSHRNGIKKPKDHRHIS. A compositionally biased stretch (basic and acidic residues) spans 47–66; the sequence is IKNDPSIKKSKNLEKKVNKE.

It belongs to the eukaryotic ribosomal protein eL29 family.

The protein localises to the cytoplasm. This Tetrahymena thermophila protein is Large ribosomal subunit protein eL29 (RPL29).